A 188-amino-acid chain; its full sequence is uncharacterized protein (188 aa).

The signal sequence occupies residues 1–23; the sequence is MVRPKLAFYILPLLLAFLGSALG. A glycan (N-linked (GlcNAc...) asparagine) is linked at N74.

This is an uncharacterized protein from Mus musculus (Mouse).